Here is a 492-residue protein sequence, read N- to C-terminus: Glutamyl-tRNA(Gln) amidotransferase subunit A (492 aa).

Active-site charge relay system residues include Lys78 and Ser158. Ser182 acts as the Acyl-ester intermediate in catalysis.

It belongs to the amidase family. GatA subfamily. Heterotrimer of A, B and C subunits.

The catalysed reaction is L-glutamyl-tRNA(Gln) + L-glutamine + ATP + H2O = L-glutaminyl-tRNA(Gln) + L-glutamate + ADP + phosphate + H(+). Functionally, allows the formation of correctly charged Gln-tRNA(Gln) through the transamidation of misacylated Glu-tRNA(Gln) in organisms which lack glutaminyl-tRNA synthetase. The reaction takes place in the presence of glutamine and ATP through an activated gamma-phospho-Glu-tRNA(Gln). The polypeptide is Glutamyl-tRNA(Gln) amidotransferase subunit A (Parvibaculum lavamentivorans (strain DS-1 / DSM 13023 / NCIMB 13966)).